The following is a 359-amino-acid chain: Phosphate acyltransferase (359 aa).

The protein belongs to the PlsX family. Homodimer. Probably interacts with PlsY.

It is found in the cytoplasm. It catalyses the reaction a fatty acyl-[ACP] + phosphate = an acyl phosphate + holo-[ACP]. Its pathway is lipid metabolism; phospholipid metabolism. Its function is as follows. Catalyzes the reversible formation of acyl-phosphate (acyl-PO(4)) from acyl-[acyl-carrier-protein] (acyl-ACP). This enzyme utilizes acyl-ACP as fatty acyl donor, but not acyl-CoA. This chain is Phosphate acyltransferase, found in Salmonella heidelberg (strain SL476).